The primary structure comprises 116 residues: UPF0298 protein EF_2453 (116 aa).

Belongs to the UPF0298 family.

It is found in the cytoplasm. This Enterococcus faecalis (strain ATCC 700802 / V583) protein is UPF0298 protein EF_2453.